We begin with the raw amino-acid sequence, 125 residues long: Small ribosomal subunit protein uS13 (125 aa).

Residues 95-125 are disordered; sequence GLPVNGQRTRTNARTRKGGKKTVANKKKVTK. Over residues 105-125 the composition is skewed to basic residues; that stretch reads TNARTRKGGKKTVANKKKVTK.

The protein belongs to the universal ribosomal protein uS13 family. As to quaternary structure, part of the 30S ribosomal subunit. Forms a loose heterodimer with protein S19. Forms two bridges to the 50S subunit in the 70S ribosome.

In terms of biological role, located at the top of the head of the 30S subunit, it contacts several helices of the 16S rRNA. In the 70S ribosome it contacts the 23S rRNA (bridge B1a) and protein L5 of the 50S subunit (bridge B1b), connecting the 2 subunits; these bridges are implicated in subunit movement. Contacts the tRNAs in the A and P-sites. In Leptospira borgpetersenii serovar Hardjo-bovis (strain L550), this protein is Small ribosomal subunit protein uS13.